We begin with the raw amino-acid sequence, 126 residues long: Aspartate 1-decarboxylase (126 aa).

Serine 25 serves as the catalytic Schiff-base intermediate with substrate; via pyruvic acid. Residue serine 25 is modified to Pyruvic acid (Ser). Threonine 57 is a binding site for substrate. The active-site Proton donor is tyrosine 58. Residue 73-75 (GAA) participates in substrate binding.

Belongs to the PanD family. In terms of assembly, heterooctamer of four alpha and four beta subunits. The cofactor is pyruvate. In terms of processing, is synthesized initially as an inactive proenzyme, which is activated by self-cleavage at a specific serine bond to produce a beta-subunit with a hydroxyl group at its C-terminus and an alpha-subunit with a pyruvoyl group at its N-terminus.

The protein localises to the cytoplasm. It catalyses the reaction L-aspartate + H(+) = beta-alanine + CO2. The protein operates within cofactor biosynthesis; (R)-pantothenate biosynthesis; beta-alanine from L-aspartate: step 1/1. In terms of biological role, catalyzes the pyruvoyl-dependent decarboxylation of aspartate to produce beta-alanine. In Saccharophagus degradans (strain 2-40 / ATCC 43961 / DSM 17024), this protein is Aspartate 1-decarboxylase.